The sequence spans 161 residues: Protein-export protein SecB (161 aa).

The protein belongs to the SecB family. Homotetramer, a dimer of dimers. One homotetramer interacts with 1 SecA dimer.

The protein localises to the cytoplasm. In terms of biological role, one of the proteins required for the normal export of preproteins out of the cell cytoplasm. It is a molecular chaperone that binds to a subset of precursor proteins, maintaining them in a translocation-competent state. It also specifically binds to its receptor SecA. The protein is Protein-export protein SecB of Shewanella sp. (strain MR-7).